Consider the following 73-residue polypeptide: uncharacterized protein (73 aa).

This sequence belongs to the asfivirus I73R family.

It localises to the virion. This is an uncharacterized protein from Ornithodoros (relapsing fever ticks).